A 184-amino-acid chain; its full sequence is MKYSVAFVALAAVAAQAQSLADVPKCAIPCLDKAIASETSCDKTDLACVCKGFSAVRSKATSCVIDECGTDVAINEVLPATENLCKNPPKESEAKSTAEEEKPTTTAAATSTLVVVTTSAEVVETTAAATTTVAPIIPTTAAEEPATSTPAAATPTKGPEQANGAAGLKGLGALAMAAFAALAL.

The first 17 residues, 1–17 (MKYSVAFVALAAVAAQA), serve as a signal peptide directing secretion. Residues 18–112 (QSLADVPKCA…PTTTAAATST (95 aa)) form the CFEM domain. Intrachain disulfides connect cysteine 26–cysteine 68, cysteine 30–cysteine 63, cysteine 41–cysteine 48, and cysteine 50–cysteine 85. A heme-binding site is contributed by aspartate 45. 2 disordered regions span residues 83–106 (NLCK…PTTT) and 136–163 (IIPT…EQAN). Over residues 88-103 (PPKESEAKSTAEEEKP) the composition is skewed to basic and acidic residues. Asparagine 163 carries the GPI-anchor amidated asparagine lipid modification. A propeptide spans 164-184 (GAAGLKGLGALAMAAFAALAL) (removed in mature form).

It belongs to the RBT5 family. In terms of assembly, interacts with Z.mays LRR5; the interaction is direct. Interacts (via CFEM domain) with Z.mays WAK17 isoform 2; the interaction is direct.

The protein resides in the secreted. The protein localises to the cell wall. It localises to the cell membrane. It is found in the cell septum. Its subcellular location is the cytoplasm. In terms of biological role, suppresses host programmed cell death during infection by binding to Z.mays WAK17 isoform 2 and Z.mays LRR5, to prevent activation of Z.mays WAK17 isoform 1 and the downstream hypersensitive response. In Gibberella zeae (strain ATCC MYA-4620 / CBS 123657 / FGSC 9075 / NRRL 31084 / PH-1) (Wheat head blight fungus), this protein is Effector CFEM1.